A 349-amino-acid chain; its full sequence is Phenylalanine--tRNA ligase alpha subunit (349 aa).

Residue Glu-259 coordinates Mg(2+).

The protein belongs to the class-II aminoacyl-tRNA synthetase family. Phe-tRNA synthetase alpha subunit type 1 subfamily. In terms of assembly, tetramer of two alpha and two beta subunits. Mg(2+) serves as cofactor.

The protein resides in the cytoplasm. The enzyme catalyses tRNA(Phe) + L-phenylalanine + ATP = L-phenylalanyl-tRNA(Phe) + AMP + diphosphate + H(+). This Lactobacillus helveticus (strain DPC 4571) protein is Phenylalanine--tRNA ligase alpha subunit.